The following is a 450-amino-acid chain: MSRKYFGTDGVRGRVGTFPITPDFAMKLGWAAGKVLASTGTQEVLIGKDTRSSGYMLESAIEAGLSAAGVNVALIGPMPTPAVAYLASTFRADAGVVISASHNPFYDNGIKFFSNSGTKLNDQQELEIEALLDQALNHNAMECVSSELLGKVRRITDAAGRYIEFCKGVFAKDLTLAGLKIVVDSANGAAYHIAPNVYRELGAEVISINDKPNGTNINDHCGATHLDSLQTAVMVHEADLGIAMDGDADRVMFVDHNGHVVDGDQILYILAKSAKQQGTMTGGVVGTLMSNLGLEIALKEMDIPFKRAKVGDRYVVEQLKQTGWRIGGEGSGHILHLDHASTGDAVVASLLVLQAVLQSGQSLAEIVSCMKKLPQVLLNVRLTANNADEILASAAVKQAVIEAEAVLAENGRVLLRKSGTEPLIRVMVESTDPEMSQAQAEHIAKVVTSF.

The active-site Phosphoserine intermediate is S101. Mg(2+) is bound by residues S101, D245, D247, and D249. Phosphoserine is present on S101.

It belongs to the phosphohexose mutase family. The cofactor is Mg(2+). Post-translationally, activated by phosphorylation.

The catalysed reaction is alpha-D-glucosamine 1-phosphate = D-glucosamine 6-phosphate. Catalyzes the conversion of glucosamine-6-phosphate to glucosamine-1-phosphate. This is Phosphoglucosamine mutase 2 from Shewanella frigidimarina (strain NCIMB 400).